Consider the following 232-residue polypeptide: Protein TIFY 10c (232 aa).

The disordered stretch occupies residues proline 54–leucine 73. The 36-residue stretch at alanine 114–threonine 149 folds into the Tify domain. The interval aspartate 151–leucine 176 is disordered. Polar residues predominate over residues asparagine 156–leucine 165. The Jas signature appears at proline 177–glutamine 202. Residues alanine 179–arginine 186 carry the Nuclear localization signal motif.

Belongs to the TIFY/JAZ family. In terms of assembly, interacts with BHLH148. Interacts with COI1B in a coronatine-dependent manner. Coronatine is an analog of jasmonoyl isoleucine (JA-Ile). Interacts with TIFY5/JAZ2, TIFY6B/JAZ4, TIFY9/JAZ5, TIFY11A, TIFY11D/JAZ12 and TIFY11G/JAZ15. Post-translationally, ubiquitinated. Increase in jasmonoyl isoleucine (JA-Ile) levels mediates its degradation via COI1B-mediated proteasome pathway.

The protein localises to the nucleus. The protein resides in the cytoplasm. It is found in the cytosol. Repressor of jasmonate (JA) responses. Acts as a repressor of JA-induced resistance to the bacterial blight pathogen Xanthomonas oryzae pv. oryzae (Xoo). Regulates JA-induced accumulation of linalool at the transcriptional level of linalool synthase gene LIS. Linalool is important for resistance to bacterial blight pathogen Xoo. The polypeptide is Protein TIFY 10c (Oryza sativa subsp. indica (Rice)).